We begin with the raw amino-acid sequence, 138 residues long: Large ribosomal subunit protein uL16 (138 aa).

The span at 1-16 (MLIPRRVKHRKQHHPG) shows a compositional bias: basic residues. The segment at 1-24 (MLIPRRVKHRKQHHPGRSGAATGG) is disordered.

Belongs to the universal ribosomal protein uL16 family. Part of the 50S ribosomal subunit.

Its function is as follows. Binds 23S rRNA and is also seen to make contacts with the A and possibly P site tRNAs. The sequence is that of Large ribosomal subunit protein uL16 from Paenarthrobacter aurescens (strain TC1).